A 263-amino-acid polypeptide reads, in one-letter code: TLC domain-containing protein 4 (263 aa).

The next 4 membrane-spanning stretches (helical) occupy residues 7 to 27 (LLIS…YFVS), 53 to 73 (VVST…FLFD), 90 to 110 (VNIA…ILYW), and 124 to 144 (ASLY…IGNF). Residues 44 to 246 (KKKIEWNSRV…ISKGCIKVIS (203 aa)) form the TLC domain. N6-acetyllysine is present on Lys-165. The next 2 helical transmembrane spans lie at 173–193 (IVIN…ASML) and 211–231 (LGVL…VMNV).

It belongs to the TLCD4 family.

It is found in the membrane. This chain is TLC domain-containing protein 4, found in Homo sapiens (Human).